A 590-amino-acid chain; its full sequence is Rho GTPase-activating protein 36 (590 aa).

The 201-residue stretch at 214–414 (MSLNPIAQQI…AMIDNWDILF (201 aa)) folds into the Rho-GAP domain. The tract at residues 526–590 (IPNNEDTDSD…KGKFATRFFP (65 aa)) is disordered.

In terms of assembly, may interacts (via the Rho-GAP domain) with the active form of RAC1.

In terms of biological role, GTPase activator for the Rho-type GTPases by converting them to an inactive GDP-bound state. This is Rho GTPase-activating protein 36 (Arhgap36) from Mus musculus (Mouse).